A 317-amino-acid chain; its full sequence is Glucokinase (317 aa).

The protein belongs to the ROK (NagC/XylR) family. Homodimer. It depends on a divalent metal cation as a cofactor.

It carries out the reaction D-glucose + ATP = D-glucose 6-phosphate + ADP + H(+). Catalyzes the phosphorylation of D-glucose to D-glucose 6-phosphate using ATP as the phosphate donor. Can also phosphorylate 2-deoxyglucose, with lower efficiency. ITP can also serve as a phosphoryl donor. The protein is Glucokinase of Thermotoga maritima (strain ATCC 43589 / DSM 3109 / JCM 10099 / NBRC 100826 / MSB8).